The following is a 238-amino-acid chain: Inner kinetochore subunit NKP1 (238 aa).

S222 bears the Phosphoserine mark.

The protein belongs to the NKP1 family. In terms of assembly, component of the inner kinetochore constitutive centromere-associated network (CCAN) (also known as central kinetochore CTF19 complex in yeast), which is composed of at least AME1, CHL4, CNN1, CTF3, CTF19, IML3, MCM16, MCM21, MCM22, MHF1, MHF2, MIF2, NKP1, NKP2, OKP1 and WIP1. NKP1 interacts directly with OKP1 and AME1.

It is found in the nucleus. The protein localises to the chromosome. It localises to the centromere. The protein resides in the kinetochore. Functionally, component of the kinetochore, a multiprotein complex that assembles on centromeric DNA and attaches chromosomes to spindle microtubules, mediating chromosome segregation and sister chromatid segregation during meiosis and mitosis. Component of the inner kinetochore constitutive centromere-associated network (CCAN), which serves as a structural platform for outer kinetochore assembly. In Saccharomyces cerevisiae (strain ATCC 204508 / S288c) (Baker's yeast), this protein is Inner kinetochore subunit NKP1 (NKP1).